The sequence spans 560 residues: Muellerian-inhibiting factor (560 aa).

The first 24 residues, 1–24, serve as a signal peptide directing secretion; the sequence is MRDLPLTSLALVLSALGALLGTEA. A propeptide spanning residues 25–451 is cleaved from the precursor; the sequence is LRAEEPAVGT…DPRGPGRAQR (427 aa). Asn-64 carries an N-linked (GlcNAc...) asparagine glycan. A disordered region spans residues 259–287; sequence PLPAHGQLDTVPFPPPRPSAELEESPPSA. Asn-329 carries N-linked (GlcNAc...) asparagine glycosylation. Intrachain disulfides connect Cys-462–Cys-526, Cys-488–Cys-557, and Cys-492–Cys-559.

This sequence belongs to the TGF-beta family. As to quaternary structure, homodimer; disulfide-linked. Post-translationally, preproprotein is proteolytically processed to generate N- and C-terminal cleavage products that homodimerize and associate to form a biologically active non-covalent complex. Binding of the non-covalent complex to AMHR2 induces dissociation of the pro-region from the mature C-terminal dimer. The N-terminal portion of the protein, despite having no intrinsic activity, has the role of amplifying the activity of the C-terminus. In ovaries, AMH is detected in granulosa cells of early growing follicles.

The protein resides in the secreted. In terms of biological role, plays an important role in several reproductive functions. Induces Muellerian duct regression during male fetal sexual differentiation. Also plays a role in Leydig cell differentiation and function. In female acts as a negative regulator of the primordial to primary follicle transition and decreases FSH sensitivity of growing follicles. AMH signals by binding to a specific type-II receptor, AMHR2, that heterodimerizes with type-I receptors (ACVR1 and BMPR1A), and recruiting SMAD proteins that are translocated to the nucleus to regulate target gene expression. The polypeptide is Muellerian-inhibiting factor (Homo sapiens (Human)).